A 368-amino-acid polypeptide reads, in one-letter code: Cyanide hydratase (368 aa).

The region spanning Y6 to L285 is the CN hydrolase domain. The active-site Proton acceptor is E46. K128 is an active-site residue. Catalysis depends on C163, which acts as the Nucleophile. The disordered stretch occupies residues L341 to A368.

The protein belongs to the carbon-nitrogen hydrolase superfamily. Nitrilase family. As to quaternary structure, oligomer of dimers, forming left-handed helical fibers.

It carries out the reaction formamide = hydrogen cyanide + H2O. Catalyzes the hydration of cyanide to formamide. Degradation of cyanide may be important for plant pathogenic fungi in infection of cyanogenic plants. The sequence is that of Cyanide hydratase from Microdochium sorghi (Zonate leaf spot disease fungus).